Consider the following 236-residue polypeptide: Envelope glycoprotein (236 aa).

Over 1–202 (CQFDGNTISG…EWILGVLNGN (202 aa)) the chain is Lumenal. Asparagine 25 carries N-linked (GlcNAc...) asparagine; by host glycosylation. 5 cysteine pairs are disulfide-bonded: cysteine 67–cysteine 97, cysteine 90–cysteine 142, cysteine 107–cysteine 112, cysteine 143–cysteine 148, and cysteine 182–cysteine 186. Residues 203–223 (WMVVAVLIALLILSILLFTLC) traverse the membrane as a helical segment. 2 binding to the ribonucleoprotein regions span residues 219-231 (LFTL…PSYR) and 219-236 (LFTL…EHKP). Over 224–236 (CPRRPSYRKEHKP) the chain is Cytoplasmic.

Belongs to the hantavirus envelope glycoprotein family. Homodimer. Homotetramer; forms heterotetrameric Gn-Gc spikes in the pre-fusion conformation. Homotrimer; forms homotrimer in the post-fusion conformation at acidic pH. Interacts (via C-terminus) with the nucleoprotein. In terms of processing, envelope polyprotein precursor is quickly cleaved in vivo just after synthesis, presumably by host signal peptidase.

It localises to the virion membrane. Its subcellular location is the host cell surface. The protein resides in the host Golgi apparatus membrane. It is found in the host endoplasmic reticulum membrane. Functionally, forms homotetramers with glycoprotein N at the surface of the virion. Attaches the virion to host cell receptors including integrin ITGAV/ITGB3. This attachment induces virion internalization predominantly through clathrin-dependent endocytosis. Class II fusion protein that promotes fusion of viral membrane with host endosomal membrane after endocytosis of the virion. This Homo sapiens (Human) protein is Envelope glycoprotein (GP).